The chain runs to 279 residues: Thioredoxin-like 1-2, chloroplastic (279 aa).

The transit peptide at M1–R34 directs the protein to the chloroplast. Positions P61–P203 constitute a Thioredoxin domain. Residues C126 and C129 each act as nucleophile in the active site. A disulfide bond links C126 and C129. The tract at residues G242–R279 is disordered.

This sequence belongs to the thioredoxin family.

The protein resides in the plastid. It localises to the chloroplast. Probable thiol-disulfide oxidoreductase that may participate in various redox reactions. The sequence is that of Thioredoxin-like 1-2, chloroplastic from Oryza sativa subsp. japonica (Rice).